A 91-amino-acid polypeptide reads, in one-letter code: Large ribosomal subunit protein bL27 (91 aa).

Positions 1–21 (MAHKKSGGSSRNGRDSAGRRL) are disordered.

Belongs to the bacterial ribosomal protein bL27 family.

In Phenylobacterium zucineum (strain HLK1), this protein is Large ribosomal subunit protein bL27.